Consider the following 339-residue polypeptide: MNAPHLLEKILRGERLSSEEAYALAMSIAKNEIDDVQKAGFLVALRCGRERPEELEGFVRALLDLAVKVGPFREAIDTAGTGGDRANLFNVSTAAAVTLAAMGYKVVKHGNRSVTSAAGSADVMEALGYNLNLPPEKATEVFERTGFVYLFAPLYHPAMKNVAHVRKNLGIRTIFNLAGPLSNPARPGYQLVGVSEPWMLDVFAKALKNLGVERAAVVHGRPGIDEVSPTSTTEVYFVDRDKISYSVIDVEDFGAKPLESLEPLKVRDIKEAKEKFLRALRGEFPEAVFLGVNAAMAIHVIDGKDVSEAYLEVVETLARGEAINKLREIIEASGGNPTF.

5-phospho-alpha-D-ribose 1-diphosphate-binding positions include glycine 80, 83-84 (GD), 90-93 (NVST), 108-116 (KHGNRSVTS), and serine 120. Glycine 80 lines the anthranilate pocket. Mg(2+) is bound at residue serine 92. Asparagine 111 serves as a coordination point for anthranilate. Arginine 166 lines the anthranilate pocket. Residues aspartate 225 and glutamate 226 each coordinate Mg(2+).

The protein belongs to the anthranilate phosphoribosyltransferase family. In terms of assembly, homodimer. It depends on Mg(2+) as a cofactor.

The enzyme catalyses N-(5-phospho-beta-D-ribosyl)anthranilate + diphosphate = 5-phospho-alpha-D-ribose 1-diphosphate + anthranilate. Its pathway is amino-acid biosynthesis; L-tryptophan biosynthesis; L-tryptophan from chorismate: step 2/5. In terms of biological role, catalyzes the transfer of the phosphoribosyl group of 5-phosphorylribose-1-pyrophosphate (PRPP) to anthranilate to yield N-(5'-phosphoribosyl)-anthranilate (PRA). This is Anthranilate phosphoribosyltransferase from Ignicoccus hospitalis (strain KIN4/I / DSM 18386 / JCM 14125).